The primary structure comprises 542 residues: MSKIVSCEDDRPVRRTLEPIIVTRQGKVARLESSLTPHEAQIEDLIFLRKALNRADIPFLFIRNHKNRPVLAINIKLRPAVERALVTACASEPMYAKTIDERGLSPVLVAKGQLSQSIDPRIVRLYRRRIAPGGFRFGSRFGVELQFWSFEETLIRCPVENSLTRKVLPRKEVTPATIKLYGYKWHTIEGMFTPHASDVTFDIDLVFSWVDGSDPEFRARRAAEMSHHVVGEGDDADARIRQIDELKYALRSVNMFAPWIRRIFIATDSIPPSWLADHPMITIVPAEDHFSDRSALPTYNSHAVESQLHRIPDLSEHFLYSNDDMFFGRPLKASMFFSPGGVTRFIEAKTRIGLGTNDPTRSGFENAARVNRQLLLRRFGQLITRHLEHTTVPLRKSVLFEMEQEFPEEFARTQESVFRSGTDISVTNSLYHYYALITGRAVQQEKAKVLYVDTTSYTGLNLLPELRKRRNYDFFCLNDGSFPEVPATERAERVVSFLERYFPIPAPWEKVATDFNRQDFASPTVSAPLEDGQTANPAQTAR.

A disordered region spans residues 522–542 (SPTVSAPLEDGQTANPAQTAR). Residues 533–542 (QTANPAQTAR) are compositionally biased toward polar residues.

Belongs to the stealth family.

This chain is Exopolysaccharide phosphotransferase CpsY (cpsY), found in Mycobacterium leprae (strain TN).